Here is a 714-residue protein sequence, read N- to C-terminus: Calpain-1 catalytic subunit (714 aa).

Residues 55–354 (LFRDEAFPPV…FTRLEICNLT (300 aa)) enclose the Calpain catalytic domain. Positions 109 and 114 each coordinate Ca(2+). Active-site residues include Cys-115, His-272, and Asn-296. Residues Asn-316, Asp-318, and Asp-323 each contribute to the Ca(2+) site. Phosphothreonine is present on Thr-354. A domain III region spans residues 355–526 (PDALKSRTIR…KSAGTAELDD (172 aa)). The interval 527 to 542 (QIQANLPDEQVLSEEE) is linker. 4 EF-hand domains span residues 541–576 (EEID…IISK), 585–618 (FSLE…NRIR), 615–650 (NRIR…AGFK), and 680–714 (VRLE…TMFA). Residues 543–713 (IDENFKALFR…LFKWLQLTMF (171 aa)) are domain IV. Asp-598, Asp-600, Asn-602, Lys-604, Glu-609, Asp-628, Asp-630, Ser-632, Ser-634, and Glu-639 together coordinate Ca(2+).

This sequence belongs to the peptidase C2 family. In terms of assembly, forms a heterodimer with a small (regulatory) subunit CAPNS1. Requires Ca(2+) as cofactor. In terms of processing, undergoes calcium-induced successive autoproteolytic cleavages that generate a membrane-bound 78 kDa active form and an intracellular 75 kDa active form. Calpastatin reduces with high efficiency the transition from 78 kDa to 75 kDa calpain forms.

It is found in the cytoplasm. The protein localises to the cell membrane. It carries out the reaction Broad endopeptidase specificity.. With respect to regulation, activated by micromolar concentrations of calcium and inhibited by calpastatin. Its function is as follows. Calcium-regulated non-lysosomal thiol-protease which catalyzes limited proteolysis of substrates involved in cytoskeletal remodeling and signal transduction. Proteolytically cleaves CTBP1. Cleaves and activates caspase-7 (CASP7). In Pongo abelii (Sumatran orangutan), this protein is Calpain-1 catalytic subunit.